Consider the following 547-residue polypeptide: Glucose-6-phosphate isomerase (547 aa).

The active-site Proton donor is glutamate 353. Catalysis depends on residues histidine 384 and lysine 512.

The protein belongs to the GPI family.

The protein localises to the cytoplasm. The catalysed reaction is alpha-D-glucose 6-phosphate = beta-D-fructose 6-phosphate. Its pathway is carbohydrate biosynthesis; gluconeogenesis. It participates in carbohydrate degradation; glycolysis; D-glyceraldehyde 3-phosphate and glycerone phosphate from D-glucose: step 2/4. Catalyzes the reversible isomerization of glucose-6-phosphate to fructose-6-phosphate. This chain is Glucose-6-phosphate isomerase, found in Pseudoalteromonas atlantica (strain T6c / ATCC BAA-1087).